A 553-amino-acid polypeptide reads, in one-letter code: MNIIDQVKQTLVEEIAASINKAGLADEIPDIKIEVPKDTKNGDYATNIAMVLTKIAKRNPREIAQAIVDNLDTEKAHVKQIDIAGPGFINFYLDNQYLTAIIPEAIEKGDQFGHVNESKGQNVLLEYVSANPTGDLHIGHARNAAVGDALANILTAAGYNVTREYYINDAGNQITNLARSIETRFFEALGDNSYSMPEDGYNGKDIIEIGKDLAEKHPEIKDYSEEARLKEFRKLGVEYEMAKLKNDLAEFNTHFDNWFSETSLYEKGEILEVLAKMKELGYTYEADGATWLRTTDFKDDKDRVLIKNDGTYTYFLPDIAYHFDKVKRGNDILIDLFGADHHGYINRLKASLETFGVDSNRLEIQIMQMVRLMENGKEVKMSKRTGNAITLREIMDEVGVDAARYFLTMRSPDSHFDFDMELAKEQSQDNPVYYAQYAHARICSILKQAKEQGIEVTAANDFTTITNEKAIELLKKVADFEPTIESAAEHRSAHRITNYIQDLASHFHKFYNAEKVLTDDIEKTKAHVAMIEAVRITLKNALAMVGVSAPESM.

Residues 130–140 (ANPTGDLHIGH) carry the 'HIGH' region motif.

This sequence belongs to the class-I aminoacyl-tRNA synthetase family. As to quaternary structure, monomer.

The protein localises to the cytoplasm. The enzyme catalyses tRNA(Arg) + L-arginine + ATP = L-arginyl-tRNA(Arg) + AMP + diphosphate. In Staphylococcus aureus (strain USA300 / TCH1516), this protein is Arginine--tRNA ligase.